The sequence spans 325 residues: L-lactate dehydrogenase 1 (325 aa).

NAD(+) is bound by residues Val17, Asp38, Lys43, Tyr68, and 82–83 (GA). Residues Gln85, Arg91, and 123 to 126 (NPVD) each bind substrate. Residues 121 to 123 (AAN) and Ser146 each bind NAD(+). 151–154 (DTAR) is a substrate binding site. Residues Arg156 and His171 each contribute to the beta-D-fructose 1,6-bisphosphate site. The active-site Proton acceptor is the His178. Tyr223 bears the Phosphotyrosine mark. Thr232 contributes to the substrate binding site.

This sequence belongs to the LDH/MDH superfamily. LDH family. As to quaternary structure, homotetramer.

The protein resides in the cytoplasm. It catalyses the reaction (S)-lactate + NAD(+) = pyruvate + NADH + H(+). It functions in the pathway fermentation; pyruvate fermentation to lactate; (S)-lactate from pyruvate: step 1/1. Its activity is regulated as follows. Allosterically activated by fructose 1,6-bisphosphate (FBP). Catalyzes the conversion of lactate to pyruvate. The chain is L-lactate dehydrogenase 1 from Lactococcus lactis subsp. cremoris (Streptococcus cremoris).